We begin with the raw amino-acid sequence, 463 residues long: NADH-quinone oxidoreductase subunit N (463 aa).

The next 14 membrane-spanning stretches (helical) occupy residues 5–25, 34–54, 72–92, 99–119, 120–140, 154–174, 196–216, 230–250, 259–279, 286–303, 314–334, 356–376, 393–413, and 432–452; these read LLYG…LMLL, AGSA…VMQL, FSEI…VYSL, KYWI…DSAG, FISL…LMVL, YLLL…LVYG, LAAS…FPFH, VTAF…VRIL, AVTV…ITAI, KMLA…MFAL, LLYY…CFSI, AILL…PGFL, VAVL…GVVL, and LCWT…FMLL.

This sequence belongs to the complex I subunit 2 family. In terms of assembly, NDH-1 is composed of 14 different subunits. Subunits NuoA, H, J, K, L, M, N constitute the membrane sector of the complex.

The protein resides in the cell inner membrane. It carries out the reaction a quinone + NADH + 5 H(+)(in) = a quinol + NAD(+) + 4 H(+)(out). In terms of biological role, NDH-1 shuttles electrons from NADH, via FMN and iron-sulfur (Fe-S) centers, to quinones in the respiratory chain. The immediate electron acceptor for the enzyme in this species is believed to be ubiquinone. Couples the redox reaction to proton translocation (for every two electrons transferred, four hydrogen ions are translocated across the cytoplasmic membrane), and thus conserves the redox energy in a proton gradient. The protein is NADH-quinone oxidoreductase subunit N of Pelobacter propionicus (strain DSM 2379 / NBRC 103807 / OttBd1).